We begin with the raw amino-acid sequence, 963 residues long: MDPLWYKDAVIYQLHVRSFFDANNDGYGDFEGLRRKLPYLEELGVNTLWLMPFFQSPLRDDGYDISDYYQILPVHGTLEDFTVDEAHGRGMKVIIELVLNHTSIDHPWFQEARKPNSPMRDWYVWSDTPEKYKGVRVIFKDFETSNWTFDPVAKAYYWHRFYWHQPDLNWDSPEVEKAIHQVMFFWADLGVDGFRLDAIPYLYEREGTSCENLPETIEAVKRLRKALEERYGPGKILLAEVNMWPEETLPYFGDGDGVHMAYNFPLMPRIFMALRREDRGPIETMLKEAEGIPETAQWALFLRNHDELTLEKVTEEEREFMYEAYAPDPKFRINLGIRRRLMPLLGGDRRRYELLTALLLTLKGTPIVYYGDEIGMGDNPFLGDRNGVRTPMQWSQDRIVAFSRAPYHALFLPPVSEGPYSYHFVNVEAQRENPHSLLSFNRRFLALRNQHAKIFGRGSLTLLPVENRRVLAYLREHEGERVLVVANLSRYTQAFDLPLEAYQGLVPVELFSQQPFPPVEGRYRLTLGPHGFALFALKPVEAVLHLPSPDWAEEPAPEEADLPRVHMPGGPEVLLVDTLVHERGREELLNALAQTLKEKSWLALKPQKVALLDALRFQKDPPLYLTLLQLENHRTLQVSLPLLWSPQRREGPGLFARTHGQPGYFYELSLDPGFYRLLLARLKEGFEGRSLRAYYRGRHPGPVPEAVDLLRPGLAAGEGVWVQLGLVQDGGLDRTERVLPRLDLPWVLRPEGGLFWERGASRRVLALTGSLPPGRPQDLFAALEVRLLESLPRLRGHAPGTPGLLPGALHETEALVRLLGVRLALLHRALGEVEGVVGGHPLLGRGLGAFLELEGEVYLVALGAEKRGTVEEDLARLAYDVERAVHLALEALEAELWAFAEEVADHLHAAFLQAYRSALPEEALEEAGWTRHMAEVAAEHLHREERPARKRIHERWQAKAGKA.

Aspartate 60 is a substrate binding site. Asparagine 100 is a Ca(2+) binding site. Histidine 101 and glutamine 165 together coordinate substrate. Residue aspartate 167 coordinates Ca(2+). Arginine 195 contributes to the substrate binding site. The Nucleophile role is filled by aspartate 197. Ca(2+) contacts are provided by tyrosine 201, leucine 202, and glutamate 204. Glutamate 240 acts as the Proton donor in catalysis. Residues histidine 305 and aspartate 306 each contribute to the substrate site.

This sequence belongs to the glycosyl hydrolase 13 family. TreS subfamily.

The enzyme catalyses D-maltose = alpha,alpha-trehalose. Its function is as follows. Catalyzes the reversible interconversion of maltose and alpha,alpha-trehalose by transglucosylation. This chain is Trehalose synthase (treS), found in Thermus thermophilus.